The following is a 549-amino-acid chain: Glucose-6-phosphate isomerase (549 aa).

Catalysis depends on glutamate 353, which acts as the Proton donor. Active-site residues include histidine 384 and lysine 513.

Belongs to the GPI family.

Its subcellular location is the cytoplasm. It catalyses the reaction alpha-D-glucose 6-phosphate = beta-D-fructose 6-phosphate. Its pathway is carbohydrate biosynthesis; gluconeogenesis. The protein operates within carbohydrate degradation; glycolysis; D-glyceraldehyde 3-phosphate and glycerone phosphate from D-glucose: step 2/4. In terms of biological role, catalyzes the reversible isomerization of glucose-6-phosphate to fructose-6-phosphate. In Brucella anthropi (strain ATCC 49188 / DSM 6882 / CCUG 24695 / JCM 21032 / LMG 3331 / NBRC 15819 / NCTC 12168 / Alc 37) (Ochrobactrum anthropi), this protein is Glucose-6-phosphate isomerase.